An 838-amino-acid chain; its full sequence is Ribonuclease Z (838 aa).

Position 824 is a phosphoserine (Ser824).

Belongs to the RNase Z family. Homodimer. It depends on Zn(2+) as a cofactor.

It is found in the cytoplasm. The protein localises to the nucleus. The enzyme catalyses Endonucleolytic cleavage of RNA, removing extra 3' nucleotides from tRNA precursor, generating 3' termini of tRNAs. A 3'-hydroxy group is left at the tRNA terminus and a 5'-phosphoryl group is left at the trailer molecule.. Zinc phosphodiesterase, which displays some tRNA 3'-processing endonuclease activity. Probably involved in tRNA maturation, by removing a 3'-trailer from precursor tRNA. This Saccharomyces cerevisiae (strain ATCC 204508 / S288c) (Baker's yeast) protein is Ribonuclease Z (TRZ1).